The chain runs to 247 residues: MLRRVMIKETWEVAKNVRAFRFDEKLDFIPGQFIMLWLPGINEKPFSLADKDLIVVKKVGPFTSKLFKLEEGDYVWIRGPYGNGFKSVEGKVALVAGGIGIPPIYALAKYGNLEEKVLIYGARSKEELATLDIENYVDEVVITTDDGSAGIKGFPTDVLARRKVEFSQVYACGPEVMLAKVLEIMNYERTQISAERYMKCGIGICGSCALGPYLVCRDGPVFTGEQLKGTEIGKFSRLPDGRIKSLR.

Positions 1–87 (MLRRVMIKET…RGPYGNGFKS (87 aa)) constitute an FAD-binding FR-type domain. [2Fe-2S] cluster-binding residues include cysteine 200, cysteine 205, cysteine 208, and cysteine 216.

This sequence belongs to the PyrK family. Heterotetramer of 2 PyrK and 2 PyrD type B subunits. [2Fe-2S] cluster is required as a cofactor. Requires FAD as cofactor.

It functions in the pathway pyrimidine metabolism; UMP biosynthesis via de novo pathway; orotate from (S)-dihydroorotate (NAD(+) route): step 1/1. Its function is as follows. Responsible for channeling the electrons from the oxidation of dihydroorotate from the FMN redox center in the PyrD type B subunit to the ultimate electron acceptor NAD(+). This is Probable dihydroorotate dehydrogenase B (NAD(+)), electron transfer subunit from Pyrococcus abyssi (strain GE5 / Orsay).